Consider the following 156-residue polypeptide: Small ribosomal subunit protein uS7 (156 aa).

Belongs to the universal ribosomal protein uS7 family. In terms of assembly, part of the 30S ribosomal subunit. Contacts proteins S9 and S11.

One of the primary rRNA binding proteins, it binds directly to 16S rRNA where it nucleates assembly of the head domain of the 30S subunit. Is located at the subunit interface close to the decoding center, probably blocks exit of the E-site tRNA. This Idiomarina loihiensis (strain ATCC BAA-735 / DSM 15497 / L2-TR) protein is Small ribosomal subunit protein uS7.